We begin with the raw amino-acid sequence, 536 residues long: Prolyl 3-hydroxylase sudestada1 (536 aa).

Positions Met-1–His-35 are disordered. Over residues Lys-14–Gln-24 the composition is skewed to basic and acidic residues. The Fe2OG dioxygenase domain occupies Lys-165–Gly-275. Residues His-185 and Asp-187 each coordinate Fe cation. Residue Tyr-199 participates in 2-oxoglutarate binding. Residue His-254 coordinates Fe cation. Arg-266 is a 2-oxoglutarate binding site. The disordered stretch occupies residues Pro-467 to Asp-486.

It belongs to the TPA1 family. As to quaternary structure, monomer. Fe(2+) is required as a cofactor. Requires L-ascorbate as cofactor. In third-instar larval tissues,highly expressed in the fat body, with significant expression in other organs including the brain, salivary glands, imaginal disks and gut.

It is found in the nucleus. The protein resides in the cytoplasm. It catalyses the reaction [ribosomal protein uS12]-L-proline + 2-oxoglutarate + O2 = [ribosomal protein uS12]-(3S)-3-hydroxy-L-proline + succinate + CO2. Its function is as follows. Prolyl 3-hydroxylase that catalyzes 3-hydroxylation of 'Pro-62' of small ribosomal subunit uS12 (RpS23), thereby regulating protein translation termination efficiency. This is Prolyl 3-hydroxylase sudestada1 (sud1) from Drosophila melanogaster (Fruit fly).